The primary structure comprises 117 residues: Large ribosomal subunit protein bL20 (117 aa).

This sequence belongs to the bacterial ribosomal protein bL20 family.

Its function is as follows. Binds directly to 23S ribosomal RNA and is necessary for the in vitro assembly process of the 50S ribosomal subunit. It is not involved in the protein synthesizing functions of that subunit. This Nitratidesulfovibrio vulgaris (strain DP4) (Desulfovibrio vulgaris) protein is Large ribosomal subunit protein bL20.